The primary structure comprises 460 residues: Muscarinic acetylcholine receptor M1 (460 aa).

Residues 1-22 lie on the Extracellular side of the membrane; sequence MNTSAPPAVSPNITVLAPGKGP. 2 N-linked (GlcNAc...) asparagine glycosylation sites follow: Asn-2 and Asn-12. The helical transmembrane segment at 23-48 threads the bilayer; sequence WQVAFIGITTGLLSLATVTGNLLVLI. The Cytoplasmic portion of the chain corresponds to 49–62; it reads SFKVNTELKTVNNY. The chain crosses the membrane as a helical span at residues 63–84; sequence FLLSLACADLIIGTFSMNLYTT. Residues 85–95 lie on the Extracellular side of the membrane; that stretch reads YLLMGHWALGT. The helical transmembrane segment at 96–121 threads the bilayer; that stretch reads LACDLWLALDYVASNASVMNLLLISF. Cys-98 and Cys-178 are disulfide-bonded. Residues 122–142 are Cytoplasmic-facing; sequence DRYFSVTRPLSYRAKRTPRRA. The chain crosses the membrane as a helical span at residues 143–164; that stretch reads ALMIGLAWLVSFVLWAPAILFW. Topologically, residues 165–185 are extracellular; it reads QYLVGERTVLAGQCYIQFLSQ. The chain crosses the membrane as a helical span at residues 186–209; it reads PIITFGTAMAAFYLPVTVMCTLYW. The Cytoplasmic segment spans residues 210 to 366; sequence RIYRETESRA…LVKEKKAART (157 aa). Disordered regions lie at residues 225-256, 274-297, and 310-351; these read LQGS…GTPP, WKEE…EEPG, and EAQA…QLAK. A Phosphothreonine modification is found at Thr-230. Low complexity predominate over residues 238-247; sequence SSSSERSQPG. Basic residues predominate over residues 328-343; it reads RPTKKGRDRAGKGQKP. A helical transmembrane segment spans residues 367 to 390; sequence LSAILLAFILTWTPYNIMVLVSTF. Residues 391–397 are Extracellular-facing; the sequence is CKDCVPE. A helical transmembrane segment spans residues 398-420; that stretch reads TLWELGYWLCYVNSTINPMCYAL. The Cytoplasmic portion of the chain corresponds to 421-460; it reads CNKAFRDTFRLLLLCRWDKRRWRKIPKRPGSVHRTPSRQC. The residue at position 428 (Thr-428) is a Phosphothreonine. Ser-451 is subject to Phosphoserine. At Thr-455 the chain carries Phosphothreonine. Ser-457 is subject to Phosphoserine.

It belongs to the G-protein coupled receptor 1 family. Muscarinic acetylcholine receptor subfamily. CHRM1 sub-subfamily. As to quaternary structure, interacts with GPRASP2. Interacts with TMEM147.

The protein resides in the cell membrane. Its subcellular location is the postsynaptic cell membrane. Its function is as follows. The muscarinic acetylcholine receptor mediates various cellular responses, including inhibition of adenylate cyclase, breakdown of phosphoinositides and modulation of potassium channels through the action of G proteins. Primary transducing effect is Pi turnover. The sequence is that of Muscarinic acetylcholine receptor M1 (CHRM1) from Pongo abelii (Sumatran orangutan).